Reading from the N-terminus, the 260-residue chain is UPF0246 protein Bcep1808_2308 (260 aa).

The protein belongs to the UPF0246 family.

This Burkholderia vietnamiensis (strain G4 / LMG 22486) (Burkholderia cepacia (strain R1808)) protein is UPF0246 protein Bcep1808_2308.